Here is a 332-residue protein sequence, read N- to C-terminus: Azadirone synthase LFS (332 aa).

The region spanning 181 to 286 (ANANYTNMFH…RYSTGTFICP (106 aa)) is the Fe2OG dioxygenase domain. Residues H208, D210, and H269 each coordinate Fe cation. R277 is a binding site for 2-oxoglutarate.

It belongs to the iron/ascorbate-dependent oxidoreductase family. The cofactor is Fe(2+). As to expression, mainly expressed in petioles and, to a lower extent, in roots.

The enzyme catalyses (1S,3bR,4R,5aR,9aR,9bR,11aS)-1-(1-hydroxy-4-oxobutan-2-yl)-3b,6,6,9a,11a-pentamethyl-7-oxo-1H,2H,3bH,4H,5H,5aH,6H,7H,9aH,9bH,10H,11H,11aH-cyclopenta[a]phenanthren-4-yl acetate + 2-oxoglutarate + O2 = azadirone + succinate + CO2 + 2 H2O. It participates in secondary metabolite biosynthesis; terpenoid biosynthesis. 2-oxoglutarate-Fe(II) type oxidoreductase involved in the biosynthesis of limonoids triterpene natural products such as azadirachtin, an antifeedant widely used as bioinsecticide, and possessing many medicinal applications including anti-tumoral, anti-malarial, anti-rheumatic, antibacterial, anti-inflammatory, anti-pyretic and diuretic effects. Catalyzes the formation of azadirone. This chain is Azadirone synthase LFS, found in Melia azedarach (Chinaberry tree).